Consider the following 131-residue polypeptide: MARVTVEDCIDKVENRFDLVLLASHRARQISQGEQITIDRDNDKNPVVALREIADETLSPGDLKEALIHSLQKHVEVDEPEADLPQIASQAEETPDAELAPEENIAFDRMSEEELLAGIEGLVPPEKNDDF.

This sequence belongs to the RNA polymerase subunit omega family. In terms of assembly, the RNAP catalytic core consists of 2 alpha, 1 beta, 1 beta' and 1 omega subunit. When a sigma factor is associated with the core the holoenzyme is formed, which can initiate transcription.

It carries out the reaction RNA(n) + a ribonucleoside 5'-triphosphate = RNA(n+1) + diphosphate. Promotes RNA polymerase assembly. Latches the N- and C-terminal regions of the beta' subunit thereby facilitating its interaction with the beta and alpha subunits. This Chelativorans sp. (strain BNC1) protein is DNA-directed RNA polymerase subunit omega.